Here is a 147-residue protein sequence, read N- to C-terminus: UPF0216 protein MK1676 (147 aa).

The protein belongs to the UPF0216 family.

This Methanopyrus kandleri (strain AV19 / DSM 6324 / JCM 9639 / NBRC 100938) protein is UPF0216 protein MK1676.